Reading from the N-terminus, the 364-residue chain is Nicotinate-nucleotide--dimethylbenzimidazole phosphoribosyltransferase (364 aa).

Residue Glu332 is the Proton acceptor of the active site.

The protein belongs to the CobT family.

The catalysed reaction is 5,6-dimethylbenzimidazole + nicotinate beta-D-ribonucleotide = alpha-ribazole 5'-phosphate + nicotinate + H(+). The protein operates within nucleoside biosynthesis; alpha-ribazole biosynthesis; alpha-ribazole from 5,6-dimethylbenzimidazole: step 1/2. Its function is as follows. Catalyzes the synthesis of alpha-ribazole-5'-phosphate from nicotinate mononucleotide (NAMN) and 5,6-dimethylbenzimidazole (DMB). This Salinispora tropica (strain ATCC BAA-916 / DSM 44818 / JCM 13857 / NBRC 105044 / CNB-440) protein is Nicotinate-nucleotide--dimethylbenzimidazole phosphoribosyltransferase.